A 1240-amino-acid polypeptide reads, in one-letter code: Selection and upkeep of intraepithelial T-cells protein 6 (1240 aa).

Residues 1-24 (MGTIGVPLTAHCVVLFLLQMVALS) form the signal peptide. Residues 25–1086 (TEQFTVNGLE…CNKRNPFWKK (1062 aa)) lie on the Extracellular side of the membrane. One can recognise an Ig-like V-type domain in the interval 26–141 (EQFTVNGLES…EEHIIEVKVT (116 aa)). Residues C49 and C123 are joined by a disulfide bond. The Ig-like C1-type domain maps to 142–231 (ATSSDIQILM…FVTHQEESIS (90 aa)). 3 N-linked (GlcNAc...) asparagine glycosylation sites follow: N155, N200, and N314. C163 and C217 are disulfide-bonded. A helical transmembrane segment spans residues 1087–1107 (HALDLGISVFAIIVVTLIRHL). Residues 1108-1125 (NQREADQHFELDTLWSKD) lie on the Cytoplasmic side of the membrane. Residues 1126–1146 (TSVILCVLIMFNNRLKALIYF) form a helical membrane-spanning segment. The Extracellular portion of the chain corresponds to 1147-1167 (RLYGYSPPGKTYKYIVNYILR). The helical transmembrane segment at 1168-1188 (FSQPLFFIVYSAIILVMHLQI) threads the bilayer. At 1189 to 1205 (QNTDSLFSLYNSWMVEM) the chain is on the cytoplasmic side. A helical membrane pass occupies residues 1206–1226 (IMVLGLLLAIFNVKNIATALL). The Extracellular segment spans residues 1227–1240 (HLGRTTLRLFRIKD).

Belongs to the SKINT family. As to expression, expressed in skin.

Its subcellular location is the membrane. In terms of biological role, may act by engaging a cell surface molecule on immature T-cells in the embryonic thymus. The polypeptide is Selection and upkeep of intraepithelial T-cells protein 6 (Skint6) (Mus musculus (Mouse)).